The chain runs to 386 residues: MRIGMVCPYSFDVPGGVQSHVLQLAEVLRDAGHEVSVLAPASPHVKLPDYVVSGGKAVPIPYNGSVARLRFGPATHRKVKKWIAEGDFDVLHIHEPNAPSLSMLALQAAEGPIVATFHTSTTKSLTLSVFQGILRPYHEKIIGRIAVSDLARRWQMEALGSDAVEIPNGVDVASFADAPLLDGYPREGRTVLFLGRYDEPRKGMAVLLAALPKLVARFPDVEILIVGRGDEDELREQAGDLAGHLRFLGQVDDATKASAMRSADVYCAPHLGGESFGIVLVEAMAAGTAVVASDLDAFRRVLADGDAGRLVPVDDADGMAAALIGILEDDQLRAGYVARASERVHRYDWSVVSAQIMRVYETVSGAGIKVQVSGAANRDETAGESV.

GDP-alpha-D-mannose is bound by residues Tyr9 and Gly16. A 1,2-diacyl-sn-glycero-3-phospho-(1D-myo-inositol) is bound by residues Gln18, 62–63 (YN), and Arg68. GDP-alpha-D-mannose is bound by residues Arg196, 201–202 (RK), 251–253 (VDD), Lys256, 274–278 (ESFGI), and Glu282.

Belongs to the glycosyltransferase group 1 family. Glycosyltransferase 4 subfamily. As to quaternary structure, monomer. Mg(2+) serves as cofactor.

It is found in the cell membrane. The enzyme catalyses a 1,2-diacyl-sn-glycero-3-phospho-(1D-myo-inositol) + GDP-alpha-D-mannose = a 1,2-diacyl-sn-glycero-3-phospho-[alpha-D-mannopyranosyl-(1&lt;-&gt;6)-D-myo-inositol] + GDP + H(+). Its pathway is phospholipid metabolism; phosphatidylinositol metabolism. In terms of biological role, involved in the biosynthesis of phosphatidyl-myo-inositol mannosides (PIM) which are early precursors in the biosynthesis of lipomannans (LM) and lipoarabinomannans (LAM). Catalyzes the addition of a mannosyl residue from GDP-D-mannose (GDP-Man) to the position 2 of the carrier lipid phosphatidyl-myo-inositol (PI) to generate a phosphatidyl-myo-inositol bearing an alpha-1,2-linked mannose residue (PIM1). In contrary to PimB, the mannosyltransferase PimA is unable to transfer a mannose residue to the position 6 of the phosphatidyl-myo-inositol of PIM1. The polypeptide is Phosphatidyl-myo-inositol mannosyltransferase (Mycolicibacterium smegmatis (strain ATCC 700084 / mc(2)155) (Mycobacterium smegmatis)).